The chain runs to 183 residues: Apo-citrate lyase phosphoribosyl-dephospho-CoA transferase (183 aa).

Belongs to the CitX family.

The enzyme catalyses apo-[citrate lyase ACP] + 2'-(5''-triphospho-alpha-D-ribosyl)-3'-dephospho-CoA = holo-[citrate lyase ACP] + diphosphate. Its function is as follows. Transfers 2-(5''-triphosphoribosyl)-3'-dephosphocoenzyme-A on a serine residue to the apo-acyl carrier protein (gamma chain) of the citrate lyase to yield holo-acyl carrier protein. The protein is Apo-citrate lyase phosphoribosyl-dephospho-CoA transferase of Escherichia coli (strain SMS-3-5 / SECEC).